We begin with the raw amino-acid sequence, 443 residues long: ATP-dependent protease ATPase subunit HslU (443 aa).

Residues I20, 62–67 (GVGKTE), D255, E321, and R393 each bind ATP.

The protein belongs to the ClpX chaperone family. HslU subfamily. A double ring-shaped homohexamer of HslV is capped on each side by a ring-shaped HslU homohexamer. The assembly of the HslU/HslV complex is dependent on binding of ATP.

It is found in the cytoplasm. In terms of biological role, ATPase subunit of a proteasome-like degradation complex; this subunit has chaperone activity. The binding of ATP and its subsequent hydrolysis by HslU are essential for unfolding of protein substrates subsequently hydrolyzed by HslV. HslU recognizes the N-terminal part of its protein substrates and unfolds these before they are guided to HslV for hydrolysis. This is ATP-dependent protease ATPase subunit HslU from Helicobacter pylori (strain P12).